The sequence spans 295 residues: sn-glycerol-3-phosphate transport system permease protein UgpA (295 aa).

Residues 1–11 lie on the Cytoplasmic side of the membrane; sequence MSSSRPVFRSR. The chain crosses the membrane as a helical span at residues 12 to 32; it reads WLPYLLVAPQLIITVIFFIWP. Residues 33 to 80 are Periplasmic-facing; the sequence is AGEALWYSLQSVDPFGFSSQFVGLDNFVTLFHDSYYLDSFWTTIKFST. One can recognise an ABC transmembrane type-1 domain in the interval 76–284; sequence IKFSTFVTVS…FLVIVLTVVQ (209 aa). The chain crosses the membrane as a helical span at residues 81-101; sequence FVTVSGLLVSLFFAALVEYIV. The Cytoplasmic segment spans residues 102 to 109; sequence RGSRFYQT. A helical transmembrane segment spans residues 110–130; sequence LMLLPYAVAPAVAAVLWIFLF. The Periplasmic portion of the chain corresponds to 131 to 156; sequence NPGRGLITHFLAEFGYDWNHAQNSGQ. The helical transmembrane segment at 157–177 threads the bilayer; the sequence is AMFLVVFASVWKQISYNFLFF. The Cytoplasmic segment spans residues 178–207; sequence YAALQSIPRSLIEAAAIDGAGPIRRFFKIA. Residues 208–228 traverse the membrane as a helical segment; sequence LPLIAPVSFFLLVVNLVYAFF. The Periplasmic segment spans residues 229–262; that stretch reads DTFPVIDAATSGGPVQATTTLIYKIYREGFTGLD. A helical membrane pass occupies residues 263 to 283; that stretch reads LASSAAQSMVLMFLVIVLTVV. The Cytoplasmic portion of the chain corresponds to 284–295; that stretch reads QFRYVESKVRYQ.

This sequence belongs to the binding-protein-dependent transport system permease family. UgpAE subfamily. In terms of assembly, the complex is composed of two ATP-binding proteins (UgpC), two transmembrane proteins (UgpA and UgpE) and a solute-binding protein (UgpB).

The protein resides in the cell inner membrane. In terms of biological role, part of the ABC transporter complex UgpBAEC involved in sn-glycerol-3-phosphate (G3P) import. Probably responsible for the translocation of the substrate across the membrane. In Shigella flexneri, this protein is sn-glycerol-3-phosphate transport system permease protein UgpA (ugpA).